We begin with the raw amino-acid sequence, 486 residues long: 3-sulfolactaldehyde dehydrogenase (486 aa).

NADP(+) is bound by residues 157 to 158, 181 to 184, and 234 to 235; these read WN, RPAS, and GS. Glu-256 functions as the Proton acceptor in the catalytic mechanism. Leu-257 serves as a coordination point for NADP(+). The active-site Nucleophile is Cys-290. Glu-387 lines the NADP(+) pocket.

It belongs to the aldehyde dehydrogenase family.

It carries out the reaction (2S)-3-sulfolactaldehyde + NADP(+) + H2O = (2S)-3-sulfolactate + NADPH + 2 H(+). The enzyme catalyses (2S)-3-sulfolactaldehyde + NAD(+) + H2O = (2S)-3-sulfolactate + NADH + 2 H(+). In terms of biological role, catalyzes the oxidation of (2S)-3-sulfolactaldehyde to (2S)-3-sulfolactate, using both NAD(+) and NADP(+) as electron acceptors. Is involved in a degradation pathway of sulfoquinovose (SQ) that allows P.putida SQ1 to use SQ as the sole carbon and energy source for growth. This is 3-sulfolactaldehyde dehydrogenase from Pseudomonas putida (Arthrobacter siderocapsulatus).